We begin with the raw amino-acid sequence, 498 residues long: PHD finger protein 10 (498 aa).

Positions 1–10 are enriched in low complexity; it reads MAAAAGPGAA. Residues 1–62 form a disordered region; that stretch reads MAAAAGPGAA…SSRSCETSSQ (62 aa). Ala-2 carries the post-translational modification N-acetylalanine. A phosphoserine mark is found at Ser-12, Ser-36, and Ser-50. The essential to induce neural progenitor proliferation stretch occupies residues 89-185; the sequence is MLQEQVSEYL…HYKEYSQMQQ (97 aa). An SAY region spans residues 89–295; the sequence is MLQEQVSEYL…PPLDPELPAL (207 aa). A Glycyl lysine isopeptide (Lys-Gly) (interchain with G-Cter in SUMO2) cross-link involves residue Lys-241. The residue at position 270 (Ser-270) is a Phosphoserine. Residues 285–296 show a composition bias toward low complexity; sequence EPPLDPELPALD. Residues 285-368 form a disordered region; the sequence is EPPLDPELPA…KRSVLSKSVP (84 aa). The interval 292–334 is essential to induce neural progenitor proliferation; the sequence is LPALDSDGDSDDGEDGRGDEKRKNKGTSDSSSGNVSEGESPPD. Phosphoserine is present on residues Ser-297, Ser-301, Ser-327, and Ser-331. Over residues 318–328 the composition is skewed to polar residues; sequence TSDSSSGNVSE. Residues 345–359 show a composition bias toward basic and acidic residues; the sequence is KSKDKAATPRKDGPK. A PHD-type 1; degenerate zinc finger spans residues 379–436; the sequence is ICGICLKGKESNKKGKAESLIHCSQCENSGHPSCLDMTMELVSMIKTYPWQCMECKTC. Residue Lys-385 forms a Glycyl lysine isopeptide (Lys-Gly) (interchain with G-Cter in SUMO2) linkage. The PHD-type 2; degenerate zinc-finger motif lies at 438 to 481; it reads ICGQPHHEEEMMFCDMCDRGYHTFCVGLGAIPSGRWICDCCQRA.

This sequence belongs to the SAYP family. In terms of assembly, component of neural progenitors-specific chromatin remodeling complex (npBAF complex) composed of at least, ARID1A/BAF250A or ARID1B/BAF250B, SMARCD1/BAF60A, SMARCD3/BAF60C, SMARCA2/BRM/BAF190B, SMARCA4/BRG1/BAF190A, SMARCB1/BAF47, SMARCC1/BAF155, SMARCE1/BAF57, SMARCC2/BAF170, PHF10/BAF45A, ACTL6A/BAF53A and actin. Interacts with ACTL6A/BAF53A, SMARCA2/BRM/BAF190B, SMARCA4/BRG1/BAF190A and PBRM1/BAF180.

It localises to the nucleus. In terms of biological role, involved in transcription activity regulation by chromatin remodeling. Belongs to the neural progenitors-specific chromatin remodeling complex (npBAF complex) and is required for the proliferation of neural progenitors. During neural development a switch from a stem/progenitor to a post-mitotic chromatin remodeling mechanism occurs as neurons exit the cell cycle and become committed to their adult state. The transition from proliferating neural stem/progenitor cells to post-mitotic neurons requires a switch in subunit composition of the npBAF and nBAF complexes. As neural progenitors exit mitosis and differentiate into neurons, npBAF complexes which contain ACTL6A/BAF53A and PHF10/BAF45A, are exchanged for homologous alternative ACTL6B/BAF53B and DPF1/BAF45B or DPF3/BAF45C subunits in neuron-specific complexes (nBAF). The npBAF complex is essential for the self-renewal/proliferative capacity of the multipotent neural stem cells. The nBAF complex along with CREST plays a role regulating the activity of genes essential for dendrite growth. This chain is PHD finger protein 10 (PHF10), found in Homo sapiens (Human).